Reading from the N-terminus, the 605-residue chain is MPPSGTEVGMIRNFCIIAHIDHGKSTLADRLLEATQTLARNQMSTAQVLDDMDLERERGITIKSHAVQMIYKSSDGKEYTLNLIDTPGHVDFSYEVSRSLAACEGALLVVDATQGVEAQTIANLYLAIEAGLEIIPVINKIDLPSSDVEGVARQIIDLIGVNRDEILQVSAKAGIGIGELMEAIVQRIPAPADNRQLPLRALIFDSVFDAYRGAVAYIRIVDGVLKKDDKVRFFANGKEFYADEIGTMSLKRQPKNVLEAGNVGYLICSIKDVKDAKVGDTVTLVENPASERLAGYKDVKPMVFSGLYPVESNDFENLRESLEKLSLNDASLVYTPETSAALGFGFRCGFLGLLHMEIIQERLEREYGVNIITTVPNVEYRVVMTSGETVEVDNPSQMPESTKVNWIEEPYVSMQIITMSEYIGNIMKLGMDRRGEYKNTDYLDTSRVSMHFEFPLGEVVFDFHDKLKSISKGYASMDYEYIGYRRSDLVKLDVLLNGEPVDALSSIVHRSKSYEWGRKLCSKLKGIIPRQMYEVAIQAAIGSRVIARETISAMRKNVLAKCYGGDISRKRKLIEKQKEGKKRMKQVGRVEVPQEAFLAVLNIDE.

The region spanning 9 to 192 (GMIRNFCIIA…AIVQRIPAPA (184 aa)) is the tr-type G domain. Residues 21 to 26 (DHGKST) and 139 to 142 (NKID) contribute to the GTP site.

This sequence belongs to the TRAFAC class translation factor GTPase superfamily. Classic translation factor GTPase family. LepA subfamily.

The protein resides in the cell inner membrane. The enzyme catalyses GTP + H2O = GDP + phosphate + H(+). In terms of biological role, required for accurate and efficient protein synthesis under certain stress conditions. May act as a fidelity factor of the translation reaction, by catalyzing a one-codon backward translocation of tRNAs on improperly translocated ribosomes. Back-translocation proceeds from a post-translocation (POST) complex to a pre-translocation (PRE) complex, thus giving elongation factor G a second chance to translocate the tRNAs correctly. Binds to ribosomes in a GTP-dependent manner. This Chlorobaculum parvum (strain DSM 263 / NCIMB 8327) (Chlorobium vibrioforme subsp. thiosulfatophilum) protein is Elongation factor 4.